We begin with the raw amino-acid sequence, 95 residues long: Co-chaperonin GroES (95 aa).

It belongs to the GroES chaperonin family. Heptamer of 7 subunits arranged in a ring. Interacts with the chaperonin GroEL.

It localises to the cytoplasm. Functionally, together with the chaperonin GroEL, plays an essential role in assisting protein folding. The GroEL-GroES system forms a nano-cage that allows encapsulation of the non-native substrate proteins and provides a physical environment optimized to promote and accelerate protein folding. GroES binds to the apical surface of the GroEL ring, thereby capping the opening of the GroEL channel. The protein is Co-chaperonin GroES of Rickettsia bellii (strain RML369-C).